The chain runs to 321 residues: Lipoyl synthase (321 aa).

7 residues coordinate [4Fe-4S] cluster: cysteine 60, cysteine 65, cysteine 71, cysteine 86, cysteine 90, cysteine 93, and serine 299. A Radical SAM core domain is found at 72–288 (WEKKHATFMI…ETIGRTKGFL (217 aa)).

The protein belongs to the radical SAM superfamily. Lipoyl synthase family. [4Fe-4S] cluster is required as a cofactor.

The protein resides in the cytoplasm. The catalysed reaction is [[Fe-S] cluster scaffold protein carrying a second [4Fe-4S](2+) cluster] + N(6)-octanoyl-L-lysyl-[protein] + 2 oxidized [2Fe-2S]-[ferredoxin] + 2 S-adenosyl-L-methionine + 4 H(+) = [[Fe-S] cluster scaffold protein] + N(6)-[(R)-dihydrolipoyl]-L-lysyl-[protein] + 4 Fe(3+) + 2 hydrogen sulfide + 2 5'-deoxyadenosine + 2 L-methionine + 2 reduced [2Fe-2S]-[ferredoxin]. It functions in the pathway protein modification; protein lipoylation via endogenous pathway; protein N(6)-(lipoyl)lysine from octanoyl-[acyl-carrier-protein]: step 2/2. Catalyzes the radical-mediated insertion of two sulfur atoms into the C-6 and C-8 positions of the octanoyl moiety bound to the lipoyl domains of lipoate-dependent enzymes, thereby converting the octanoylated domains into lipoylated derivatives. The polypeptide is Lipoyl synthase (Brucella anthropi (strain ATCC 49188 / DSM 6882 / CCUG 24695 / JCM 21032 / LMG 3331 / NBRC 15819 / NCTC 12168 / Alc 37) (Ochrobactrum anthropi)).